The chain runs to 1239 residues: Anillin (1239 aa).

4 disordered regions span residues 32–67 (CSVP…SGGG), 230–265 (EAPP…RTKQ), 493–621 (FDNQ…MCNG), and 684–716 (GSTQ…NSFS). The segment covering 53-63 (RSRSPGGQSAA) has biased composition (low complexity). The interval 126 to 371 (EQAEGGALNP…ENKGTGGQSQ (246 aa)) is interaction with and bundling of F-actin. Over residues 252–265 (PKKDEVDEASRTKQ) the composition is skewed to basic and acidic residues. Positions 500–518 (SSVAAQARPPAPAPSRVVR) are enriched in low complexity. A compositionally biased stretch (pro residues) spans 519–528 (PMPPPPPPPI). The segment covering 551 to 563 (EDSKRARKSHSDR) has biased composition (basic and acidic residues). Positions 594–610 (DEEETESCMDESDDQSQ) are enriched in acidic residues. Residues 699 to 716 (ASRLSLGSKGTTASNSFS) are compositionally biased toward polar residues. A Phosphoserine modification is found at Ser712. Thr740 is modified (phosphothreonine). Phosphoserine occurs at positions 744 and 754. Thr831 carries the phosphothreonine modification. Residues 834–861 (DDEEMQNAREVNDASQAQDKIKKLLSEV) adopt a coiled-coil conformation. Residues 1106–1230 (SVEYKGFLTM…WCAYLNKALT (125 aa)) enclose the PH domain.

In terms of assembly, interacts with and bundles F-actin. In terms of tissue distribution, accumulates in the ring canals that interconnect cells of the germline cysts in males and the ovarian follicles in females. These structures develop from arrested contractile rings after a specialized cytokinesis in which the closing of the invaginating plasma membrane is incomplete. Also concentrates in the arrested cleavage furrows that initially link the oocyte to its 15 nurse cells in the early egg chamber and is subsequently lost from these furrows as germline cell division is completed.

It localises to the nucleus. The protein resides in the cytoplasm. It is found in the cytoskeleton. Its subcellular location is the cell cortex. The protein localises to the cell projection. It localises to the cilium. The protein resides in the flagellum. Required for cytokinesis. Essential for the structural integrity of the cleavage furrow and for completion of cleavage furrow ingression and proper formation of the midbody. Required during cellularization of syncytial embryos for the proper formation and function of the furrow canals, the stable inward folds of the plasma membrane which separate the peripheral nuclei. Also required for the formation of the pole cells, the progenitors of the adult germline which are formed by cytokinesis of the cytoplasmic buds at the posterior pole of the syncytial embryo. Essential for embryonic viability. The polypeptide is Anillin (scra) (Drosophila melanogaster (Fruit fly)).